Consider the following 68-residue polypeptide: Metallothionein-3 (68 aa).

N-acetylmethionine is present on methionine 1. The beta stretch occupies residues 1 to 30 (MDPETCPCPTGGSCTCSDPCKCEGCTCASS). Positions 6, 8, 14, 16, 20, 22, 25, and 27 each coordinate a divalent metal cation. The tract at residues 31 to 68 (KKSCCSCCPAECEKCAKDCVCKGGEGAEAEEKKCSCCQ) is alpha. Serine 33 is subject to Phosphoserine. Cysteine 34, cysteine 35, cysteine 37, cysteine 38, cysteine 42, cysteine 45, cysteine 49, cysteine 51, cysteine 64, cysteine 66, and cysteine 67 together coordinate a divalent metal cation.

The protein belongs to the metallothionein superfamily. Type 1 family.

Binds heavy metals. Contains five zinc and one copper atoms per polypeptide chain and only a negligible amount of cadmium. The sequence is that of Metallothionein-3 (MT3) from Bos mutus grunniens (Wild yak).